The primary structure comprises 198 residues: Pyridoxal 5'-phosphate synthase subunit PdxT (198 aa).

Residue 49–51 participates in L-glutamine binding; it reads GES. Catalysis depends on Cys81, which acts as the Nucleophile. L-glutamine is bound by residues Arg113 and 141–142; that span reads IR. Active-site charge relay system residues include His177 and Glu179.

Belongs to the glutaminase PdxT/SNO family. In terms of assembly, in the presence of PdxS, forms a dodecamer of heterodimers. Only shows activity in the heterodimer.

The catalysed reaction is aldehydo-D-ribose 5-phosphate + D-glyceraldehyde 3-phosphate + L-glutamine = pyridoxal 5'-phosphate + L-glutamate + phosphate + 3 H2O + H(+). It catalyses the reaction L-glutamine + H2O = L-glutamate + NH4(+). It functions in the pathway cofactor biosynthesis; pyridoxal 5'-phosphate biosynthesis. Functionally, catalyzes the hydrolysis of glutamine to glutamate and ammonia as part of the biosynthesis of pyridoxal 5'-phosphate. The resulting ammonia molecule is channeled to the active site of PdxS. The polypeptide is Pyridoxal 5'-phosphate synthase subunit PdxT (Mycobacterium ulcerans (strain Agy99)).